The primary structure comprises 460 residues: Serine--tRNA ligase (460 aa).

Residue Thr-255–Glu-257 coordinates L-serine. ATP is bound by residues Arg-286–Glu-288 and Val-302. Residue Glu-309 coordinates L-serine. Residue Glu-373 to Ser-376 participates in ATP binding. L-serine is bound at residue Thr-409.

It belongs to the class-II aminoacyl-tRNA synthetase family. Type-1 seryl-tRNA synthetase subfamily. In terms of assembly, homodimer. The tRNA molecule binds across the dimer.

Its subcellular location is the cytoplasm. The enzyme catalyses tRNA(Ser) + L-serine + ATP = L-seryl-tRNA(Ser) + AMP + diphosphate + H(+). It catalyses the reaction tRNA(Sec) + L-serine + ATP = L-seryl-tRNA(Sec) + AMP + diphosphate + H(+). It functions in the pathway aminoacyl-tRNA biosynthesis; selenocysteinyl-tRNA(Sec) biosynthesis; L-seryl-tRNA(Sec) from L-serine and tRNA(Sec): step 1/1. In terms of biological role, catalyzes the attachment of serine to tRNA(Ser). Is also able to aminoacylate tRNA(Sec) with serine, to form the misacylated tRNA L-seryl-tRNA(Sec), which will be further converted into selenocysteinyl-tRNA(Sec). This is Serine--tRNA ligase from Aeropyrum pernix (strain ATCC 700893 / DSM 11879 / JCM 9820 / NBRC 100138 / K1).